The sequence spans 301 residues: Ornithine carbamoyltransferase (301 aa).

Carbamoyl phosphate is bound by residues 47-50 (STRT), Gln-74, Arg-98, and 125-128 (HPCQ). L-ornithine-binding positions include Asn-156, Asp-220, and 224–225 (SM). Carbamoyl phosphate is bound by residues 260-261 (CL) and Arg-288.

The protein belongs to the aspartate/ornithine carbamoyltransferase superfamily. OTCase family.

It localises to the cytoplasm. The catalysed reaction is carbamoyl phosphate + L-ornithine = L-citrulline + phosphate + H(+). It functions in the pathway amino-acid biosynthesis; L-arginine biosynthesis; L-arginine from L-ornithine and carbamoyl phosphate: step 1/3. Functionally, reversibly catalyzes the transfer of the carbamoyl group from carbamoyl phosphate (CP) to the N(epsilon) atom of ornithine (ORN) to produce L-citrulline. The protein is Ornithine carbamoyltransferase of Methanobrevibacter smithii (strain ATCC 35061 / DSM 861 / OCM 144 / PS).